The chain runs to 397 residues: Mannonate dehydratase (397 aa).

The protein belongs to the mannonate dehydratase family. The cofactor is Fe(2+). Mn(2+) serves as cofactor.

The enzyme catalyses D-mannonate = 2-dehydro-3-deoxy-D-gluconate + H2O. It functions in the pathway carbohydrate metabolism; pentose and glucuronate interconversion. Functionally, catalyzes the dehydration of D-mannonate. The polypeptide is Mannonate dehydratase (Yersinia pestis bv. Antiqua (strain Angola)).